Here is a 569-residue protein sequence, read N- to C-terminus: MQLMEYTQLALFLGLLALMSPVLGRFIGRAVLRGEQTWLHSVLGPVERLIYRASGIRPEARQSWRQYAASLCAFSAAGFLMTFGVLMLQDKLPLNPQGFPGLSWHLAFNTAVSFLTNTNWQSYAGESTVSHFSQLVGLAYHNFVSAAAGLAVAVAVMRGLASQESKTIGNFWADLVRSVLYVLLPISLVLAVVLVGQGVVQTMSAGTEVATLEGGHQFIAMGPTASQVAIKMLGTNGGGFFNANAAHPLENPTALSNLLQMLAIFIIPSSLVFTLGEAVSNRRHAWTVWFVMACLFMVGTLSLYKAETLGTPLLTEVAQAPVTNMEGKEVRFGIFGSAMFATVTTDASCGAVNAMHDSLTPLGGLVTLVNMQMGEVIFGGVGSGLYGMVLFILLTVFLAGLMVGRTPDYLGKRIEGREVTLAMLALIIAATPPLLFSAVAAVSGWGQAALNNAGAHGFSEILYAYTSGVQNNGSAFAGLNANSPAWNVTLALAMLIGRFGVMLPMLGVAGSMASRKARPIGEFSFPVSGFTFGLLLTLVIVIVGALTYLPALALGPVVEHFQMLDGLLH.

10 helical membrane passes run 3-23, 68-88, 136-156, 179-199, 259-279, 284-304, 384-404, 422-442, 490-510, and 534-554; these read LMEY…SPVL, AASL…VLML, VGLA…AVAV, VLYV…GQGV, LQML…GEAV, HAWT…LSLY, GLYG…LMVG, AMLA…VAAV, LALA…GVAG, and LLLT…ALAL.

This sequence belongs to the KdpA family. As to quaternary structure, the system is composed of three essential subunits: KdpA, KdpB and KdpC.

It is found in the cell inner membrane. Its function is as follows. Part of the high-affinity ATP-driven potassium transport (or Kdp) system, which catalyzes the hydrolysis of ATP coupled with the electrogenic transport of potassium into the cytoplasm. This subunit binds the periplasmic potassium ions and delivers the ions to the membrane domain of KdpB through an intramembrane tunnel. This Nitratidesulfovibrio vulgaris (strain DP4) (Desulfovibrio vulgaris) protein is Potassium-transporting ATPase potassium-binding subunit.